Here is a 186-residue protein sequence, read N- to C-terminus: Ribosome-recycling factor (186 aa).

This sequence belongs to the RRF family.

The protein resides in the cytoplasm. Its function is as follows. Responsible for the release of ribosomes from messenger RNA at the termination of protein biosynthesis. May increase the efficiency of translation by recycling ribosomes from one round of translation to another. In Bordetella avium (strain 197N), this protein is Ribosome-recycling factor.